Here is a 770-residue protein sequence, read N- to C-terminus: Tripartite terminase subunit 1 (770 aa).

A C3H1-type zinc finger spans residues cysteine 199 to histidine 227. Phenylalanine 675–glycine 682 is a binding site for ATP.

The protein belongs to the herpesviridae TRM1 protein family. Associates with TRM2 and TRM3 to form the tripartite terminase complex. Interacts with portal protein.

The protein localises to the host nucleus. Functionally, component of the molecular motor that translocates viral genomic DNA in empty capsid during DNA packaging. Forms a tripartite terminase complex together with TRM2 and TRM3 in the host cytoplasm. Once the complex reaches the host nucleus, it interacts with the capsid portal vertex. This portal forms a ring in which genomic DNA is translocated into the capsid. TRM1 carries an endonuclease activity that plays an important role for the cleavage of concatemeric viral DNA into unit length genomes. This chain is Tripartite terminase subunit 1, found in Varicella-zoster virus (strain Dumas) (HHV-3).